The following is a 717-amino-acid chain: DNA ligase (717 aa).

Residues 41 to 45, 90 to 91, and E124 contribute to the NAD(+) site; these read DARYD and SL. The active-site N6-AMP-lysine intermediate is K126. Residues R147, E183, K299, and K323 each coordinate NAD(+). Zn(2+) is bound by residues C428, C431, C446, and C452. The region spanning 636 to 717 is the BRCT domain; the sequence is ADYSPVAGKT…WLQLINEHHI (82 aa).

This sequence belongs to the NAD-dependent DNA ligase family. LigA subfamily. Requires Mg(2+) as cofactor. Mn(2+) is required as a cofactor.

The enzyme catalyses NAD(+) + (deoxyribonucleotide)n-3'-hydroxyl + 5'-phospho-(deoxyribonucleotide)m = (deoxyribonucleotide)n+m + AMP + beta-nicotinamide D-nucleotide.. Its function is as follows. DNA ligase that catalyzes the formation of phosphodiester linkages between 5'-phosphoryl and 3'-hydroxyl groups in double-stranded DNA using NAD as a coenzyme and as the energy source for the reaction. It is essential for DNA replication and repair of damaged DNA. In Bartonella bacilliformis (strain ATCC 35685 / KC583 / Herrer 020/F12,63), this protein is DNA ligase.